We begin with the raw amino-acid sequence, 153 residues long: Large ribosomal subunit protein uL23m (153 aa).

Residues 110 to 153 (IFPEKDKKSKEGSVEEMHEKFMEDERQRQKPDPRRGGVTEWFGL) form a disordered region. The span at 111 to 146 (FPEKDKKSKEGSVEEMHEKFMEDERQRQKPDPRRGG) shows a compositional bias: basic and acidic residues.

It belongs to the universal ribosomal protein uL23 family. As to quaternary structure, component of the mitochondrial ribosome large subunit (39S) which comprises a 16S rRNA and about 50 distinct proteins.

It localises to the mitochondrion. This Danio rerio (Zebrafish) protein is Large ribosomal subunit protein uL23m (mrpl23).